We begin with the raw amino-acid sequence, 275 residues long: Diaminopimelate epimerase (275 aa).

Positions 12, 45, and 65 each coordinate substrate. Cysteine 74 (proton donor) is an active-site residue. Residues 75–76 (GN), asparagine 158, asparagine 191, and 209–210 (ER) contribute to the substrate site. The active-site Proton acceptor is cysteine 218. Substrate is bound at residue 219-220 (GT).

This sequence belongs to the diaminopimelate epimerase family. Homodimer.

The protein resides in the cytoplasm. The catalysed reaction is (2S,6S)-2,6-diaminopimelate = meso-2,6-diaminopimelate. Its pathway is amino-acid biosynthesis; L-lysine biosynthesis via DAP pathway; DL-2,6-diaminopimelate from LL-2,6-diaminopimelate: step 1/1. Its function is as follows. Catalyzes the stereoinversion of LL-2,6-diaminopimelate (L,L-DAP) to meso-diaminopimelate (meso-DAP), a precursor of L-lysine and an essential component of the bacterial peptidoglycan. In Shewanella frigidimarina (strain NCIMB 400), this protein is Diaminopimelate epimerase.